The sequence spans 232 residues: MAVISMKQLLEAGVHFGHQTRRWNPKMAPYIFTERNGIYIIDLQKTVRKVDEAYNFIREVATQGKKILFVGTKKQAQDSVKEEAERCGMYYVNQRWLGGMLTNFQTIQKRISRLRELEKMEADGTFEVLPKKEVSKLLHEKEKLERFLGGIKDMKELPGAIFVIDPRKERIAVAEARRLGIPLVGIVDTNCDPDEIDYVIPGNDDAIRAVKLLTAKMADAVLEGNQGQSDAQ.

It belongs to the universal ribosomal protein uS2 family.

The chain is Small ribosomal subunit protein uS2 from Heliobacterium modesticaldum (strain ATCC 51547 / Ice1).